A 254-amino-acid chain; its full sequence is 3-deoxy-manno-octulosonate cytidylyltransferase (254 aa).

This sequence belongs to the KdsB family.

It localises to the cytoplasm. The enzyme catalyses 3-deoxy-alpha-D-manno-oct-2-ulosonate + CTP = CMP-3-deoxy-beta-D-manno-octulosonate + diphosphate. It functions in the pathway nucleotide-sugar biosynthesis; CMP-3-deoxy-D-manno-octulosonate biosynthesis; CMP-3-deoxy-D-manno-octulosonate from 3-deoxy-D-manno-octulosonate and CTP: step 1/1. Its pathway is bacterial outer membrane biogenesis; lipopolysaccharide biosynthesis. Functionally, activates KDO (a required 8-carbon sugar) for incorporation into bacterial lipopolysaccharide in Gram-negative bacteria. This Chlamydia trachomatis serovar L2 (strain ATCC VR-902B / DSM 19102 / 434/Bu) protein is 3-deoxy-manno-octulosonate cytidylyltransferase.